The chain runs to 138 residues: Acidic phospholipase A2 RV-7 (138 aa).

The first 16 residues, 1-16 (MRTLWIVAVCLIGVEG), serve as a signal peptide directing secretion. Cystine bridges form between Cys42/Cys131, Cys44/Cys60, Cys59/Cys111, Cys65/Cys138, Cys66/Cys104, Cys73/Cys97, and Cys91/Cys102. Ca(2+) contacts are provided by Tyr43, Gly45, and Gly47. His63 is an active-site residue. Asp64 contacts Ca(2+). Asp105 is an active-site residue.

The protein belongs to the phospholipase A2 family. Group II subfamily. D49 sub-subfamily. In terms of assembly, heterodimer of a weakly toxic basic protein having phospholipase A2 activity (RV-4) and a non-toxic acidic protein which inhibits its enzymatic activity but potentiates its lethal potency and neurotoxicity (RV-7). It depends on Ca(2+) as a cofactor. In terms of tissue distribution, expressed by the venom gland.

Its subcellular location is the secreted. The catalysed reaction is a 1,2-diacyl-sn-glycero-3-phosphocholine + H2O = a 1-acyl-sn-glycero-3-phosphocholine + a fatty acid + H(+). Its function is as follows. Heterodimer: RV-4/RV-7 targets the presynaptic sites of the neuromuscular junction. Monomer: snake venom phospholipase A2 (PLA2) RV-7 that has low enzymatic activity and is not toxic. It inhibits the enzymatic activity of RV-4 in vitro but potentiates its lethal potency and neurotoxicity. It may facilitate the specific binding of RV-4 to its presynaptic binding sites, probably by acting as a chaperone, minimizing distraction and destruction of RV-4 en route to the site of action by reducing non-specific binding to muscle and other organs. PLA2 catalyzes the calcium-dependent hydrolysis of the 2-acyl groups in 3-sn-phosphoglycerides. In Daboia siamensis (Eastern Russel's viper), this protein is Acidic phospholipase A2 RV-7.